We begin with the raw amino-acid sequence, 332 residues long: Biotin synthase (332 aa).

The Radical SAM core domain maps to 53 to 282; the sequence is HFGKKVKLNM…TKEIRISGGR (230 aa). [4Fe-4S] cluster is bound by residues C71, C75, and C78. [2Fe-2S] cluster is bound by residues C115, C147, C207, and R277.

This sequence belongs to the radical SAM superfamily. Biotin synthase family. Homodimer. It depends on [4Fe-4S] cluster as a cofactor. The cofactor is [2Fe-2S] cluster.

The enzyme catalyses (4R,5S)-dethiobiotin + (sulfur carrier)-SH + 2 reduced [2Fe-2S]-[ferredoxin] + 2 S-adenosyl-L-methionine = (sulfur carrier)-H + biotin + 2 5'-deoxyadenosine + 2 L-methionine + 2 oxidized [2Fe-2S]-[ferredoxin]. It functions in the pathway cofactor biosynthesis; biotin biosynthesis; biotin from 7,8-diaminononanoate: step 2/2. Functionally, catalyzes the conversion of dethiobiotin (DTB) to biotin by the insertion of a sulfur atom into dethiobiotin via a radical-based mechanism. The chain is Biotin synthase from Bacillus cereus (strain AH187).